The chain runs to 371 residues: Maltose/maltodextrin import ATP-binding protein MalK (371 aa).

Residues 4–234 (VQLQNVTKAW…PADRFVAGFI (231 aa)) form the ABC transporter domain. Residue 36–43 (GPSGCGKS) participates in ATP binding.

Belongs to the ABC transporter superfamily. Maltooligosaccharide importer (TC 3.A.1.1.1) family. As to quaternary structure, the complex is composed of two ATP-binding proteins (MalK), two transmembrane proteins (MalG and MalK) and a solute-binding protein (MalE).

Its subcellular location is the cell inner membrane. It carries out the reaction D-maltose(out) + ATP + H2O = D-maltose(in) + ADP + phosphate + H(+). Its function is as follows. Part of the ABC transporter complex MalEFGK involved in maltose/maltodextrin import. Responsible for energy coupling to the transport system. In Escherichia coli O6:K15:H31 (strain 536 / UPEC), this protein is Maltose/maltodextrin import ATP-binding protein MalK.